Here is a 255-residue protein sequence, read N- to C-terminus: NAD kinase (255 aa).

Residue D44 is the Proton acceptor of the active site. Residues 44–45 (DG), H49, 114–115 (NE), D144, A152, 155–160 (SAYNLS), and Q216 each bind NAD(+).

It belongs to the NAD kinase family. A divalent metal cation serves as cofactor.

Its subcellular location is the cytoplasm. The catalysed reaction is NAD(+) + ATP = ADP + NADP(+) + H(+). In terms of biological role, involved in the regulation of the intracellular balance of NAD and NADP, and is a key enzyme in the biosynthesis of NADP. Catalyzes specifically the phosphorylation on 2'-hydroxyl of the adenosine moiety of NAD to yield NADP. This is NAD kinase from Rickettsia rickettsii (strain Iowa).